A 380-amino-acid polypeptide reads, in one-letter code: Pectinesterase QRT1 (380 aa).

An N-terminal signal peptide occupies residues 1-26; that stretch reads MKVEAFIPAVLLLCFGVMLCLKSSCA. Asparagine 74 and asparagine 137 each carry an N-linked (GlcNAc...) asparagine glycan. Threonine 164 and glutamine 198 together coordinate substrate. Aspartate 221 acts as the Proton donor in catalysis. An N-linked (GlcNAc...) asparagine glycan is attached at asparagine 227. Cysteine 235 and cysteine 255 are oxidised to a cystine. Aspartate 242 (nucleophile) is an active-site residue. Arginine 298 and tryptophan 300 together coordinate substrate. Asparagine 302 is a glycosylation site (N-linked (GlcNAc...) asparagine).

This sequence belongs to the pectinesterase family. Expressed in flower buds, siliques, developing guard cells, floral nectares, at the stigmatic surface, in the hypocotyl-root transition zone and the area of lateral root emergence. Not expressed in mature leaves.

The protein resides in the secreted. It localises to the cell wall. The enzyme catalyses [(1-&gt;4)-alpha-D-galacturonosyl methyl ester](n) + n H2O = [(1-&gt;4)-alpha-D-galacturonosyl](n) + n methanol + n H(+). It functions in the pathway glycan metabolism; pectin degradation; 2-dehydro-3-deoxy-D-gluconate from pectin: step 1/5. Pectinesterase required for cell type-specific pectin degradation to separate microspores. This chain is Pectinesterase QRT1, found in Arabidopsis thaliana (Mouse-ear cress).